Consider the following 537-residue polypeptide: MTKYIFVTGGVVSSIGKGIVAASLGRLLKNRGLKVTIQKFDPYINVDPGTMSPYQHGEVFVTDDGTETDLDLGHYERFIDINLNKYSNVTTGKIYSEVLQKERRGDYLGATVQVIPHITNAIKEKIMRAGTTTDSDIVITEIGGTVGDIESLPFIEALRQMKSDLGSDNVFYIHTTLIPYLRAAGEMKTKPTQHSVKELRSYGIQPNMLVVRTEQPITREMRNKIASFCDVEPEAVIESLDVKTIYSIPLNVQKQNMDQIVLDHFDVQAPKADMSEWIDLEHHVQNLSRTIKIALVGKYVALQDAYISVTEALKHAGYTDDADIDLKKISAEDVTPENVEELLGDADGILVPGGFGDRGIEGKITAIKYARENDVPFLGICLGMQMASVEFARNVLGLKDANSAEIDPKTPDNIIDLMADQEDVEDMGGTQRLGAYPCKLKPGTVAAKAYHNEEVVMERHRHRYEFNNKYREAMAAKGMVFSGTSPDNRLVEVIELPKKRFFVASQYHPEFLSRPNRPEGLFKAFIDAANQTGKVKA.

The amidoligase domain stretch occupies residues 1-267 (MTKYIFVTGG…DQIVLDHFDV (267 aa)). Position 13 (Ser-13) interacts with CTP. Ser-13 is a UTP binding site. 14 to 19 (SIGKGI) lines the ATP pocket. Residue Tyr-54 coordinates L-glutamine. Asp-71 contacts ATP. Residues Asp-71 and Glu-141 each coordinate Mg(2+). CTP is bound by residues 148-150 (DIE), 188-193 (KTKPTQ), and Lys-224. UTP is bound by residues 188–193 (KTKPTQ) and Lys-224. In terms of domain architecture, Glutamine amidotransferase type-1 spans 292 to 535 (KIALVGKYVA…IDAANQTGKV (244 aa)). Gly-354 serves as a coordination point for L-glutamine. Cys-381 (nucleophile; for glutamine hydrolysis) is an active-site residue. Residues 382–385 (LGMQ), Glu-405, and Arg-463 contribute to the L-glutamine site. Active-site residues include His-508 and Glu-510.

Belongs to the CTP synthase family. As to quaternary structure, homotetramer.

The enzyme catalyses UTP + L-glutamine + ATP + H2O = CTP + L-glutamate + ADP + phosphate + 2 H(+). The catalysed reaction is L-glutamine + H2O = L-glutamate + NH4(+). It carries out the reaction UTP + NH4(+) + ATP = CTP + ADP + phosphate + 2 H(+). The protein operates within pyrimidine metabolism; CTP biosynthesis via de novo pathway; CTP from UDP: step 2/2. Allosterically activated by GTP, when glutamine is the substrate; GTP has no effect on the reaction when ammonia is the substrate. The allosteric effector GTP functions by stabilizing the protein conformation that binds the tetrahedral intermediate(s) formed during glutamine hydrolysis. Inhibited by the product CTP, via allosteric rather than competitive inhibition. Its function is as follows. Catalyzes the ATP-dependent amination of UTP to CTP with either L-glutamine or ammonia as the source of nitrogen. Regulates intracellular CTP levels through interactions with the four ribonucleotide triphosphates. The polypeptide is CTP synthase (Lactiplantibacillus plantarum (strain ATCC BAA-793 / NCIMB 8826 / WCFS1) (Lactobacillus plantarum)).